We begin with the raw amino-acid sequence, 470 residues long: ATP synthase subunit beta 2 (470 aa).

Position 155–162 (155–162 (GGAGVGKT)) interacts with ATP.

Belongs to the ATPase alpha/beta chains family. F-type ATPases have 2 components, CF(1) - the catalytic core - and CF(0) - the membrane proton channel. CF(1) has five subunits: alpha(3), beta(3), gamma(1), delta(1), epsilon(1). CF(0) has three main subunits: a(1), b(2) and c(9-12). The alpha and beta chains form an alternating ring which encloses part of the gamma chain. CF(1) is attached to CF(0) by a central stalk formed by the gamma and epsilon chains, while a peripheral stalk is formed by the delta and b chains.

It localises to the cell inner membrane. It catalyses the reaction ATP + H2O + 4 H(+)(in) = ADP + phosphate + 5 H(+)(out). Produces ATP from ADP in the presence of a proton gradient across the membrane. The catalytic sites are hosted primarily by the beta subunits. The polypeptide is ATP synthase subunit beta 2 (Nitrosospira multiformis (strain ATCC 25196 / NCIMB 11849 / C 71)).